Here is a 275-residue protein sequence, read N- to C-terminus: MYRDFGEPGPSSGAGSAYGRPAQPQQAQTQTVQQQKFHLVPSINAVSGSQELQWMVQPHFLGPSGYPRPLTYPQYSPPQPRPGVIRALGPPPGVRRRPCEQISPEEEERRRVRRERNKLAAAKCRNRRKELTDFLQAETDKLEDEKSGLQREIEELQKQKERLELVLEAHRPICKIPEEDKKDTGGTSSTSGAGSPPGPCRPVPCISLSPGPVLEPEALHTPTLMTTPSLTPFTPSLVFTYPSTPEPCSSAHRKSSSSSGDPSSDPLGSPTLLAL.

Disordered regions lie at residues 1–33 and 71–115; these read MYRD…QTVQ and TYPQ…VRRE. Residues 7–33 are compositionally biased toward low complexity; that stretch reads EPGPSSGAGSAYGRPAQPQQAQTQTVQ. Residues 107–170 form the bZIP domain; that stretch reads EERRRVRRER…ERLELVLEAH (64 aa). Positions 109–129 are basic motif; sequence RRRVRRERNKLAAAKCRNRRK. Residues 135–163 are leucine-zipper; it reads LQAETDKLEDEKSGLQREIEELQKQKERL. A compositionally biased stretch (basic and acidic residues) spans 171–184; it reads RPICKIPEEDKKDT. The interval 171–275 is disordered; the sequence is RPICKIPEED…PLGSPTLLAL (105 aa). Low complexity-rich tracts occupy residues 185–194, 219–237, and 256–275; these read GGTSSTSGAG, LHTP…TPSL, and SSSS…LLAL. At S269 the chain carries Phosphoserine.

Belongs to the bZIP family. Fos subfamily. In terms of assembly, heterodimer. Interacts with the BAF multiprotein chromatin-remodeling complex subunits SMARCB1 and SMARCD1. Interacts with ARID1A and JUN.

Its subcellular location is the nucleus. The polypeptide is Fos-related antigen 1 (Fosl1) (Rattus norvegicus (Rat)).